The primary structure comprises 354 residues: Protein REDOX 1 (354 aa).

A Zn(2+)-binding site is contributed by cysteine 44. An NAD(+)-binding site is contributed by 45-49 (HSDLH). Histidine 66, cysteine 97, cysteine 100, cysteine 103, and cysteine 111 together coordinate Zn(2+). NAD(+) contacts are provided by residues 185 to 190 (GLGGLG), lysine 214, 271 to 273 (VGA), 295 to 297 (SAV), and arginine 340.

The protein belongs to the zinc-containing alcohol dehydrogenase family. Requires Zn(2+) as cofactor. In terms of tissue distribution, expressed in leaf epidermis.

It carries out the reaction 3,17-didehydrostemmadenine + NADPH + H2O = (16S)-deshydroxymethyl-stemmadenine + formate + NADP(+). The enzyme catalyses 3,17-didehydrostemmadenine + NADPH + H2O = (16R)-deshydroxymethyl-stemmadenine + formate + NADP(+). It catalyses the reaction 17-dehydrostemmadenine + NADP(+) = 3,17-didehydrostemmadenine + NADPH. It functions in the pathway alkaloid biosynthesis. Component of iboga and aspidosperma monoterpenoid indole alkaloids (MIAs, e.g. tabersonine and catharanthine) biosynthesis pathway from 19E-geissoschizine. Catalyzes the first oxidation step of the unstable intermediate product resulting from the reaction triggered by the geissoschizine oxidase (GO) in the stemmadenine biosynthesis process from 19E-geissoschizine. This Catharanthus roseus (Madagascar periwinkle) protein is Protein REDOX 1.